Here is a 161-residue protein sequence, read N- to C-terminus: Cell wall protein YLR042C (161 aa).

Residues 1-24 (MKISQFGSLAFAPIVLLQLFIVQA) form the signal peptide. Residues asparagine 77, asparagine 104, and asparagine 120 are each glycosylated (N-linked (GlcNAc...) asparagine). Positions 111 to 139 (FTPLPSSSRNETKSSQTTNTISSSTSTGG) are disordered. The span at 123-137 (KSSQTTNTISSSTST) shows a compositional bias: low complexity. A lipid anchor (GPI-anchor amidated glycine) is attached at glycine 139. The propeptide at 140–161 (VGSVKPCLYFVLMLETIAYLFS) is removed in mature form.

The GPI-anchor is attached to the protein in the endoplasmic reticulum and serves to target the protein to the cell surface. There, the glucosamine-inositol phospholipid moiety is cleaved off and the GPI-modified mannoprotein is covalently attached via its lipidless GPI glycan remnant to the 1,6-beta-glucan of the outer cell wall layer.

The protein resides in the secreted. Its subcellular location is the cell wall. It localises to the membrane. This chain is Cell wall protein YLR042C, found in Saccharomyces cerevisiae (strain ATCC 204508 / S288c) (Baker's yeast).